A 541-amino-acid chain; its full sequence is uncharacterized protein (541 aa).

5 helical membrane-spanning segments follow: residues 10–32 (LNNQ…KINI), 39–57 (SSAI…YTLP), 62–84 (TLGL…FFSL), 91–113 (LSLG…TYLF), and 146–168 (APAA…IQII). RCK C-terminal domains are found at residues 183 to 260 (LNKE…DDLE) and 268 to 352 (TPVD…IFGN). Helical transmembrane passes span 357–375 (SYNF…GFIL), 385–407 (SGIF…SNIY), 428–447 (GLVL…ILAT), 452–474 (GLQL…VFIC), 481–500 (PFLS…PGLA), and 515–537 (YATV…IFIV).

The protein belongs to the AAE transporter (TC 2.A.81) family.

Its subcellular location is the cell membrane. This is an uncharacterized protein from Desulfotalea psychrophila (strain LSv54 / DSM 12343).